The sequence spans 294 residues: Acetylglutamate kinase (294 aa).

Residues 63–64, R85, and N188 each bind substrate; that span reads GG.

Belongs to the acetylglutamate kinase family. ArgB subfamily.

The protein resides in the cytoplasm. The catalysed reaction is N-acetyl-L-glutamate + ATP = N-acetyl-L-glutamyl 5-phosphate + ADP. Its pathway is amino-acid biosynthesis; L-arginine biosynthesis; N(2)-acetyl-L-ornithine from L-glutamate: step 2/4. In terms of biological role, catalyzes the ATP-dependent phosphorylation of N-acetyl-L-glutamate. This chain is Acetylglutamate kinase, found in Methanococcus vannielii (strain ATCC 35089 / DSM 1224 / JCM 13029 / OCM 148 / SB).